A 348-amino-acid polypeptide reads, in one-letter code: Large ribosomal subunit protein uL3m (348 aa).

Residues 1–40 (MPGWRLLTQVGAQVLGRLGDGLGAALGPGNRTHIWLFVRG) constitute a mitochondrion transit peptide.

This sequence belongs to the universal ribosomal protein uL3 family. As to quaternary structure, component of the mitochondrial large ribosomal subunit (mt-LSU). Mature mammalian 55S mitochondrial ribosomes consist of a small (28S) and a large (39S) subunit. The 28S small subunit contains a 12S ribosomal RNA (12S mt-rRNA) and 30 different proteins. The 39S large subunit contains a 16S rRNA (16S mt-rRNA), a copy of mitochondrial valine transfer RNA (mt-tRNA(Val)), which plays an integral structural role, and 52 different proteins.

The protein localises to the mitochondrion. In Homo sapiens (Human), this protein is Large ribosomal subunit protein uL3m (MRPL3).